A 119-amino-acid polypeptide reads, in one-letter code: Acidic phospholipase A2 natratoxin (119 aa).

7 cysteine pairs are disulfide-bonded: Cys-11/Cys-71, Cys-26/Cys-118, Cys-28/Cys-44, Cys-43/Cys-99, Cys-50/Cys-92, Cys-60/Cys-85, and Cys-78/Cys-90. The Ca(2+) site is built by Tyr-27, Gly-29, and Gly-31. His-47 is a catalytic residue. Asp-48 provides a ligand contact to Ca(2+). Asp-93 is an active-site residue.

This sequence belongs to the phospholipase A2 family. Group I subfamily. D49 sub-subfamily. Ca(2+) serves as cofactor. Expressed by the venom gland.

It localises to the secreted. The catalysed reaction is a 1,2-diacyl-sn-glycero-3-phosphocholine + H2O = a 1-acyl-sn-glycero-3-phosphocholine + a fatty acid + H(+). Snake venom phospholipase A2 (PLA2) that has an effectively inhibitory effect on A-type K(+) currents (Kv/KCN) in acutely dissociated rat dorsal root ganglion (DRG) neurons. This inhibitory effect is independent of its enzymatic activity. PLA2 catalyzes the calcium-dependent hydrolysis of the 2-acyl groups in 3-sn-phosphoglycerides. The polypeptide is Acidic phospholipase A2 natratoxin (Naja atra (Chinese cobra)).